A 149-amino-acid chain; its full sequence is Arginine repressor (149 aa).

This sequence belongs to the ArgR family.

It is found in the cytoplasm. It participates in amino-acid biosynthesis; L-arginine biosynthesis [regulation]. Regulates arginine biosynthesis genes. The chain is Arginine repressor from Chlorobaculum tepidum (strain ATCC 49652 / DSM 12025 / NBRC 103806 / TLS) (Chlorobium tepidum).